The following is a 524-amino-acid chain: M-phase inducer phosphatase 1 (524 aa).

The Phosphodegron signature appears at 74–84 (MGSSESTDSGF). Phosphoserine; by CHEK1 is present on S76. Phosphoserine; by NEK11 occurs at positions 79, 82, and 88. S107 is modified (phosphoserine). At S124 the chain carries Phosphoserine; by CHEK1 and CHEK2. Positions 141 to 143 (KEN) match the KEN box motif. The residue at position 178 (S178) is a Phosphoserine; by CHEK1. The disordered stretch occupies residues 264–317 (LCSSSTRSVLKRPERSQEESPPGSTKRRKSMSGASPKESTNPEKAHETLHQSLS). Phosphoserine; by CHEK1 and CHEK2 occurs at positions 279 and 293. The segment covering 303 to 312 (TNPEKAHETL) has biased composition (basic and acidic residues). S321 is modified (phosphoserine). In terms of domain architecture, Rhodanese spans 376–482 (LIKEFVIIDC…FFMKCQSYCE (107 aa)). C431 is an active-site residue. The residue at position 507 (T507) is a Phosphothreonine; by CHEK1. A phosphoserine; by PLK3 mark is found at S513 and S519.

This sequence belongs to the MPI phosphatase family. As to quaternary structure, interacts with CCNB1/cyclin B1. Interacts with YWHAE/14-3-3 epsilon when phosphorylated. Interacts with CUL1 specifically when CUL1 is neddylated and active. Interacts with BTRC/BTRCP1 and FBXW11/BTRCP2. Interactions with CUL1, BTRC and FBXW11 are enhanced upon DNA damage. Interacts with CHEK2; mediates CDC25A phosphorylation and degradation in response to infrared-induced DNA damages. Interacts with HSP90AB1; prevents heat shock-mediated CDC25A degradation and contributes to cell cycle progression. In terms of processing, phosphorylated by CHEK1 on Ser-76, Ser-124, Ser-178, Ser-279, Ser-293 and Thr-507 during checkpoint mediated cell cycle arrest. Also phosphorylated by CHEK2 on Ser-124, Ser-279, and Ser-293 during checkpoint mediated cell cycle arrest. Phosphorylation on Ser-178 and Thr-507 creates binding sites for YWHAE/14-3-3 epsilon which inhibits CDC25A. Phosphorylation on Ser-76, Ser-124, Ser-178, Ser-279 and Ser-293 may also promote ubiquitin-dependent proteolysis of CDC25A by the SCF complex. Phosphorylation of CDC25A at Ser-76 by CHEK1 primes it for subsequent phosphorylation at Ser-79, Ser-82 and Ser-88 by NEK11. Phosphorylation by NEK11 is required for BTRC-mediated polyubiquitination and degradation. Phosphorylation by PIM1 leads to an increase in phosphatase activity. Phosphorylated by PLK3 following DNA damage, leading to promote its ubiquitination and degradation. Post-translationally, ubiquitinated by the anaphase promoting complex/cyclosome (APC/C) ubiquitin ligase complex that contains FZR1/CDH1 during G1 phase leading to its degradation by the proteasome. Ubiquitinated by a SCF complex containing BTRC and FBXW11 during S phase leading to its degradation by the proteasome. Deubiquitination by USP17L2/DUB3 leads to its stabilization.

The catalysed reaction is O-phospho-L-tyrosyl-[protein] + H2O = L-tyrosyl-[protein] + phosphate. With respect to regulation, stimulated by B-type cyclins. Stimulated by PIM1-mediated phosphorylation. In terms of biological role, tyrosine protein phosphatase which functions as a dosage-dependent inducer of mitotic progression. Directly dephosphorylates CDK1 and stimulates its kinase activity. Also dephosphorylates CDK2 in complex with cyclin-E, in vitro. This is M-phase inducer phosphatase 1 (CDC25A) from Homo sapiens (Human).